The following is a 308-amino-acid chain: Pantothenate kinase (308 aa).

91 to 98 is a binding site for ATP; the sequence is GSVAVGKS.

Belongs to the prokaryotic pantothenate kinase family.

It is found in the cytoplasm. The enzyme catalyses (R)-pantothenate + ATP = (R)-4'-phosphopantothenate + ADP + H(+). Its pathway is cofactor biosynthesis; coenzyme A biosynthesis; CoA from (R)-pantothenate: step 1/5. The sequence is that of Pantothenate kinase from Lacticaseibacillus paracasei (strain ATCC 334 / BCRC 17002 / CCUG 31169 / CIP 107868 / KCTC 3260 / NRRL B-441) (Lactobacillus paracasei).